The following is a 1292-amino-acid chain: Calcium-transporting ATPase 2 (1292 aa).

The tract at residues 1 to 105 (MPTYNDDDDS…EQASSKSSTS (105 aa)) is disordered. At 1–236 (MPTYNDDDDS…RLMLEAFKDK (236 aa)) the chain is on the cytoplasmic side. The segment covering 23–41 (KPSSSQFLGVPSSNYNQRE) has biased composition (polar residues). Residues 44–60 (SRSGSSTISREPSSSGT) are compositionally biased toward low complexity. Over residues 68–78 (DSMKESYDKNK) the composition is skewed to basic and acidic residues. A helical transmembrane segment spans residues 237-257 (VLILLSIAAVVSLALGLYQTF). Residues 258 to 273 (GQPPTLDPITGKPEPR) lie on the Vacuolar side of the membrane. Residues 274 to 294 (VEWVEGVAIMAAIVIVVTVGG) form a helical membrane-spanning segment. At 295-448 (VNDWQKELQF…QLRLSRVADA (154 aa)) the chain is on the cytoplasmic side. A helical membrane pass occupies residues 449 to 469 (IAKLGGAASALLFIVLLIEFL). Over 470 to 488 (VRLKSNDSSSKNKGQEFLQ) the chain is Vacuolar. The chain crosses the membrane as a helical span at residues 489–509 (ILIVSVTLLVVAVPEGLPLAV). Ca(2+) contacts are provided by valine 498 and glutamate 503. The Cytoplasmic portion of the chain corresponds to 510-938 (TLALAFATNR…GRTVNDAVKK (429 aa)). Catalysis depends on aspartate 545, which acts as the 4-aspartylphosphate intermediate. 2 residues coordinate Mg(2+): aspartate 545 and threonine 547. ATP is bound by residues threonine 547, glutamate 638, lysine 691, arginine 736, 807-809 (TGD), arginine 856, and lysine 862. A Mg(2+)-binding site is contributed by aspartate 881. Asparagine 884 serves as a coordination point for ATP. Residues 939-959 (FLQFQITVNITAVFLTIISAV) form a helical membrane-spanning segment. Position 947 (asparagine 947) interacts with Ca(2+). The Vacuolar segment spans residues 960–966 (ASTDQSS). A helical membrane pass occupies residues 967 to 987 (VLTAVQLLWVNLIMDTLAALA). Ca(2+) is bound by residues asparagine 977 and aspartate 981. Topologically, residues 988–1016 (LATDPPTPEVLKRKPEKPGASLFTFDMWK) are cytoplasmic. Residues 1017 to 1037 (MIICQSMYQLAVTLVLHFAGN) form a helical membrane-spanning segment. Residues 1038-1084 (SIFHYPSNTADMNTIVFNTFVWLQLFNEINNRRLDNKLNIFERINHN) are Vacuolar-facing. A helical membrane pass occupies residues 1085–1105 (FLFIAIFVIVAGIQVIIVFFG). Topologically, residues 1106–1115 (GAAFSVKRID) are cytoplasmic. Residues 1116–1136 (GKGWAISIVFGVISIPLGALI) form a helical membrane-spanning segment. The Vacuolar portion of the chain corresponds to 1137-1292 (RCVPNNFLRK…ALDKKSSNVH (156 aa)).

Belongs to the cation transport ATPase (P-type) (TC 3.A.3) family.

It is found in the vacuole membrane. The catalysed reaction is Ca(2+)(in) + ATP + H2O = Ca(2+)(out) + ADP + phosphate + H(+). Functionally, this magnesium-dependent enzyme catalyzes the hydrolysis of ATP coupled with the transport of calcium. Transports the calcium to the vacuole and participates in the control of the cytosolic free calcium. This chain is Calcium-transporting ATPase 2 (pmc1), found in Schizosaccharomyces pombe (strain 972 / ATCC 24843) (Fission yeast).